A 352-amino-acid chain; its full sequence is V-type ATP synthase subunit C (352 aa).

Belongs to the V-ATPase V0D/AC39 subunit family.

In terms of biological role, produces ATP from ADP in the presence of a proton gradient across the membrane. This Deinococcus radiodurans (strain ATCC 13939 / DSM 20539 / JCM 16871 / CCUG 27074 / LMG 4051 / NBRC 15346 / NCIMB 9279 / VKM B-1422 / R1) protein is V-type ATP synthase subunit C (atpC).